Here is a 323-residue protein sequence, read N- to C-terminus: Oligodendrocyte transcription factor 2 (323 aa).

2 stretches are compositionally biased toward polar residues: residues Met-1–Ser-13 and Lys-27–Ser-45. The disordered stretch occupies residues Met-1–Gln-107. The segment covering Lys-76–Ser-93 has biased composition (low complexity). Positions Gln-108–Leu-162 constitute a bHLH domain.

As to quaternary structure, interacts with NKX2-2. Interacts with ZNF488. In terms of tissue distribution, expressed in the brain, in oligodendrocytes. Strongly expressed in oligodendrogliomas, while expression is weak to moderate in astrocytomas. Expression in glioblastomas highly variable.

The protein resides in the nucleus. Its subcellular location is the cytoplasm. Functionally, required for oligodendrocyte and motor neuron specification in the spinal cord, as well as for the development of somatic motor neurons in the hindbrain. Functions together with ZNF488 to promote oligodendrocyte differentiation. Cooperates with OLIG1 to establish the pMN domain of the embryonic neural tube. Antagonist of V2 interneuron and of NKX2-2-induced V3 interneuron development. This chain is Oligodendrocyte transcription factor 2 (OLIG2), found in Homo sapiens (Human).